The chain runs to 163 residues: UPF0416 protein RBE_0909 (163 aa).

The protein belongs to the UPF0416 family.

The protein is UPF0416 protein RBE_0909 of Rickettsia bellii (strain RML369-C).